The primary structure comprises 392 residues: Nucleolysin TIAR (392 aa).

2 consecutive RRM domains span residues arginine 9–threonine 102 and phenylalanine 114–arginine 192. N6-acetyllysine is present on lysine 139. A Phosphoserine modification is found at serine 218. An RRM 3 domain is found at cysteine 222 to glutamate 294. The interval glycine 363–glutamine 392 is disordered. The span at glycine 369 to asparagine 380 shows a compositional bias: pro residues.

Interacts with FASTK. In terms of processing, phosphorylated by MAPK14 following DNA damage, releasing TIAR from GADD45A mRNA. As to expression, expressed both in primordial germ cells (PGCs) and in neighboring somatic cells.

The protein resides in the nucleus. It localises to the cytoplasm. Its subcellular location is the stress granule. The protein localises to the cytolytic granule. RNA-binding protein involved in alternative pre-RNA splicing and in cytoplasmic stress granules formation. Shows a preference for uridine-rich RNAs. Activates splicing of alternative exons with weak 5' splice sites followed by a U-rich stretch on its own pre-mRNA and on TIA1 mRNA. Promotes the inclusion of TIA1 exon 5 to give rise to the long isoform (isoform a) of TIA1. Acts downstream of the stress-induced phosphorylation of EIF2S1/EIF2A to promote the recruitment of untranslated mRNAs to cytoplasmic stress granules (SG). Possesses nucleolytic activity against cytotoxic lymphocyte target cells. May be involved in apoptosis. This Mus musculus (Mouse) protein is Nucleolysin TIAR (Tial1).